The sequence spans 635 residues: DNA-directed RNA polymerase subunit gamma (635 aa).

Zn(2+) contacts are provided by Cys74, Cys76, Cys89, and Cys92. The Mg(2+) site is built by Asp471, Asp473, and Asp475.

The protein belongs to the RNA polymerase beta' chain family. RpoC1 subfamily. In terms of assembly, in cyanobacteria the RNAP catalytic core is composed of 2 alpha, 1 beta, 1 beta', 1 gamma and 1 omega subunit. When a sigma factor is associated with the core the holoenzyme is formed, which can initiate transcription. Mg(2+) serves as cofactor. It depends on Zn(2+) as a cofactor.

It carries out the reaction RNA(n) + a ribonucleoside 5'-triphosphate = RNA(n+1) + diphosphate. DNA-dependent RNA polymerase catalyzes the transcription of DNA into RNA using the four ribonucleoside triphosphates as substrates. This is DNA-directed RNA polymerase subunit gamma from Prochlorococcus marinus (strain NATL2A).